A 176-amino-acid polypeptide reads, in one-letter code: NAD(P)H-quinone oxidoreductase subunit 6, chloroplastic (176 aa).

The next 5 helical transmembrane spans lie at 10 to 30 (ILLVFLGSGLILGGLGVVLLT), 32 to 52 (PISSAFSLGLVLVCISLFYIP), 61 to 81 (AQLLIYVGAINVLIVFAVMFM), 92 to 112 (LWTIGDGFTSLVCTSILFSLI), and 152 to 172 (FYLPFELISIILLVALIGAIA).

This sequence belongs to the complex I subunit 6 family. In terms of assembly, NDH is composed of at least 16 different subunits, 5 of which are encoded in the nucleus.

It is found in the plastid. Its subcellular location is the chloroplast thylakoid membrane. The catalysed reaction is a plastoquinone + NADH + (n+1) H(+)(in) = a plastoquinol + NAD(+) + n H(+)(out). The enzyme catalyses a plastoquinone + NADPH + (n+1) H(+)(in) = a plastoquinol + NADP(+) + n H(+)(out). Its function is as follows. NDH shuttles electrons from NAD(P)H:plastoquinone, via FMN and iron-sulfur (Fe-S) centers, to quinones in the photosynthetic chain and possibly in a chloroplast respiratory chain. The immediate electron acceptor for the enzyme in this species is believed to be plastoquinone. Couples the redox reaction to proton translocation, and thus conserves the redox energy in a proton gradient. The polypeptide is NAD(P)H-quinone oxidoreductase subunit 6, chloroplastic (ndhG) (Chloranthus spicatus (Chulantree)).